Here is a 235-residue protein sequence, read N- to C-terminus: Nitrile hydratase subunit beta (235 aa).

It belongs to the nitrile hydratase subunit beta family. Heterodimer of an alpha and a beta chain.

It carries out the reaction an aliphatic primary amide = an aliphatic nitrile + H2O. In terms of biological role, NHase catalyzes the hydration of various nitrile compounds to the corresponding amides. In Rhodococcus sp, this protein is Nitrile hydratase subunit beta (nthB).